Here is a 394-residue protein sequence, read N- to C-terminus: Mitogen-activated protein kinase homolog D5 (394 aa).

Positions arginine 62–leucine 347 constitute a Protein kinase domain. ATP contacts are provided by residues isoleucine 68–valine 76 and lysine 91. Catalysis depends on aspartate 188, which acts as the Proton acceptor. A Phosphothreonine modification is found at threonine 220. Residues threonine 220–tyrosine 222 carry the TXY motif. A Phosphotyrosine modification is found at tyrosine 222.

It belongs to the protein kinase superfamily. CMGC Ser/Thr protein kinase family. MAP kinase subfamily. Requires Mg(2+) as cofactor. In terms of processing, dually phosphorylated on Thr-220 and Tyr-222, which activates the enzyme. As to expression, leaves, roots, root apices, and dormant and growing axillary buds.

The catalysed reaction is L-seryl-[protein] + ATP = O-phospho-L-seryl-[protein] + ADP + H(+). It carries out the reaction L-threonyl-[protein] + ATP = O-phospho-L-threonyl-[protein] + ADP + H(+). Its activity is regulated as follows. Activated by tyrosine and threonine phosphorylation. This chain is Mitogen-activated protein kinase homolog D5, found in Pisum sativum (Garden pea).